We begin with the raw amino-acid sequence, 343 residues long: ATP-dependent 6-phosphofructokinase (343 aa).

ATP-binding positions include Gly10 and 103–106 (GEGT). Glu104 serves as a coordination point for Mg(2+). Residues 126–128 (TID), Arg163, 170–172 (MGR), Glu223, Arg267, and 273–276 (HVQR) each bind substrate. The active-site Proton acceptor is Asp128.

This sequence belongs to the phosphofructokinase type A (PFKA) family. Mixed-substrate PFK group III subfamily. Homodimer or homotetramer. Mg(2+) is required as a cofactor.

Its subcellular location is the cytoplasm. It catalyses the reaction beta-D-fructose 6-phosphate + ATP = beta-D-fructose 1,6-bisphosphate + ADP + H(+). Its pathway is carbohydrate degradation; glycolysis; D-glyceraldehyde 3-phosphate and glycerone phosphate from D-glucose: step 3/4. In terms of biological role, catalyzes the phosphorylation of D-fructose 6-phosphate to fructose 1,6-bisphosphate by ATP, the first committing step of glycolysis. The protein is ATP-dependent 6-phosphofructokinase of Mycobacterium leprae (strain TN).